Reading from the N-terminus, the 332-residue chain is Leucine carboxyl methyltransferase 1 (332 aa).

Residues Arg-71, Gly-96, Asp-120, Asp-169 to Leu-170, and Glu-196 contribute to the S-adenosyl-L-methionine site.

Belongs to the methyltransferase superfamily. LCMT family.

The catalysed reaction is [phosphatase 2A protein]-C-terminal L-leucine + S-adenosyl-L-methionine = [phosphatase 2A protein]-C-terminal L-leucine methyl ester + S-adenosyl-L-homocysteine. Methylates the carboxyl group of the C-terminal leucine residue of protein phosphatase 2A catalytic subunits to form alpha-leucine ester residues. The sequence is that of Leucine carboxyl methyltransferase 1 (Lcmt1) from Rattus norvegicus (Rat).